Here is a 214-residue protein sequence, read N- to C-terminus: FMN-dependent NADH:quinone oxidoreductase 1 (214 aa).

Residues 17–19 and 144–147 each bind FMN; these read SWS and SAGG.

Belongs to the azoreductase type 1 family. Homodimer. The cofactor is FMN.

The catalysed reaction is 2 a quinone + NADH + H(+) = 2 a 1,4-benzosemiquinone + NAD(+). It catalyses the reaction N,N-dimethyl-1,4-phenylenediamine + anthranilate + 2 NAD(+) = 2-(4-dimethylaminophenyl)diazenylbenzoate + 2 NADH + 2 H(+). Its function is as follows. Quinone reductase that provides resistance to thiol-specific stress caused by electrophilic quinones. In terms of biological role, also exhibits azoreductase activity. Catalyzes the reductive cleavage of the azo bond in aromatic azo compounds to the corresponding amines. This chain is FMN-dependent NADH:quinone oxidoreductase 1, found in Lactococcus lactis subsp. lactis (strain IL1403) (Streptococcus lactis).